A 208-amino-acid chain; its full sequence is Methylthioribulose-1-phosphate dehydratase (208 aa).

Zn(2+) is bound by residues His99 and His101.

This sequence belongs to the aldolase class II family. MtnB subfamily. Zn(2+) serves as cofactor.

The enzyme catalyses 5-(methylsulfanyl)-D-ribulose 1-phosphate = 5-methylsulfanyl-2,3-dioxopentyl phosphate + H2O. Its pathway is amino-acid biosynthesis; L-methionine biosynthesis via salvage pathway; L-methionine from S-methyl-5-thio-alpha-D-ribose 1-phosphate: step 2/6. In terms of biological role, catalyzes the dehydration of methylthioribulose-1-phosphate (MTRu-1-P) into 2,3-diketo-5-methylthiopentyl-1-phosphate (DK-MTP-1-P). This is Methylthioribulose-1-phosphate dehydratase from Aquifex aeolicus (strain VF5).